We begin with the raw amino-acid sequence, 425 residues long: 2-methylserine hydroxymethyltransferase (425 aa).

Residues Leu-126 and 130 to 132 (GHL) contribute to the (6S)-5,6,7,8-tetrahydrofolate site. Lys-235 carries the N6-(pyridoxal phosphate)lysine modification. A (6S)-5,6,7,8-tetrahydrofolate-binding site is contributed by Glu-251.

Belongs to the SHMT family. Homodimer. The cofactor is pyridoxal 5'-phosphate.

It localises to the cytoplasm. The catalysed reaction is (6R)-5,10-methylene-5,6,7,8-tetrahydrofolate + D-alanine + H2O = 2-methylserine + (6S)-5,6,7,8-tetrahydrofolate. It functions in the pathway one-carbon metabolism; tetrahydrofolate interconversion. Functionally, catalyzes the reversible interconversion of alpha-methyl-L-serine to D-alanine with tetrahydrofolate (THF) serving as the one-carbon carrier. Cannot use alpha-methyl-D-serine, L-serine, D-serine or L-alanine. The protein is 2-methylserine hydroxymethyltransferase of Ensifer sp.